A 367-amino-acid polypeptide reads, in one-letter code: Phosphoribosylaminoimidazole-succinocarboxamide synthase (367 aa).

Belongs to the SAICAR synthetase family.

The catalysed reaction is 5-amino-1-(5-phospho-D-ribosyl)imidazole-4-carboxylate + L-aspartate + ATP = (2S)-2-[5-amino-1-(5-phospho-beta-D-ribosyl)imidazole-4-carboxamido]succinate + ADP + phosphate + 2 H(+). It functions in the pathway purine metabolism; IMP biosynthesis via de novo pathway; 5-amino-1-(5-phospho-D-ribosyl)imidazole-4-carboxamide from 5-amino-1-(5-phospho-D-ribosyl)imidazole-4-carboxylate: step 1/2. The sequence is that of Phosphoribosylaminoimidazole-succinocarboxamide synthase from Shewanella baltica (strain OS195).